We begin with the raw amino-acid sequence, 173 residues long: Large ribosomal subunit protein uL10 (173 aa).

It belongs to the universal ribosomal protein uL10 family. Part of the ribosomal stalk of the 50S ribosomal subunit. The N-terminus interacts with L11 and the large rRNA to form the base of the stalk. The C-terminus forms an elongated spine to which L12 dimers bind in a sequential fashion forming a multimeric L10(L12)X complex.

In terms of biological role, forms part of the ribosomal stalk, playing a central role in the interaction of the ribosome with GTP-bound translation factors. The chain is Large ribosomal subunit protein uL10 from Myxococcus xanthus (strain DK1622).